The primary structure comprises 293 residues: Acetyl-coenzyme A carboxylase carboxyl transferase subunit beta (293 aa).

The CoA carboxyltransferase N-terminal domain maps to 29–293; the sequence is LWSKCPECGL…GSKSLELTNA (265 aa). Positions 33, 36, 52, and 55 each coordinate Zn(2+). A C4-type zinc finger spans residues 33 to 55; sequence CPECGLVVYLKDLRLNASVCAGC.

Belongs to the AccD/PCCB family. As to quaternary structure, acetyl-CoA carboxylase is a heterohexamer composed of biotin carboxyl carrier protein (AccB), biotin carboxylase (AccC) and two subunits each of ACCase subunit alpha (AccA) and ACCase subunit beta (AccD). Requires Zn(2+) as cofactor.

The protein localises to the cytoplasm. The enzyme catalyses N(6)-carboxybiotinyl-L-lysyl-[protein] + acetyl-CoA = N(6)-biotinyl-L-lysyl-[protein] + malonyl-CoA. It functions in the pathway lipid metabolism; malonyl-CoA biosynthesis; malonyl-CoA from acetyl-CoA: step 1/1. Functionally, component of the acetyl coenzyme A carboxylase (ACC) complex. Biotin carboxylase (BC) catalyzes the carboxylation of biotin on its carrier protein (BCCP) and then the CO(2) group is transferred by the transcarboxylase to acetyl-CoA to form malonyl-CoA. This chain is Acetyl-coenzyme A carboxylase carboxyl transferase subunit beta, found in Synechococcus sp. (strain CC9902).